The sequence spans 756 residues: Catalase-peroxidase (756 aa).

The tryptophyl-tyrosyl-methioninium (Trp-Tyr) (with M-270) cross-link spans 91-244 (WHSAGTYRTG…LAAVQMGLIY (154 aa)). The active-site Proton acceptor is the H92. The interval 198–230 (AQKKMQQPGDGTLVAEPENHANEESRTASGERN) is disordered. A compositionally biased stretch (basic and acidic residues) spans 214–223 (PENHANEESR). A cross-link (tryptophyl-tyrosyl-methioninium (Tyr-Met) (with W-91)) is located at residues 244 to 270 (YVNPEGPEGVPDPVASARDIRETFGRM). H285 is a binding site for heme b.

Belongs to the peroxidase family. Peroxidase/catalase subfamily. Homodimer or homotetramer. It depends on heme b as a cofactor. In terms of processing, formation of the three residue Trp-Tyr-Met cross-link is important for the catalase, but not the peroxidase activity of the enzyme.

It catalyses the reaction H2O2 + AH2 = A + 2 H2O. The enzyme catalyses 2 H2O2 = O2 + 2 H2O. In terms of biological role, bifunctional enzyme with both catalase and broad-spectrum peroxidase activity. The chain is Catalase-peroxidase from Pseudomonas syringae pv. syringae (strain B728a).